The following is a 100-amino-acid chain: Aspartyl/glutamyl-tRNA(Asn/Gln) amidotransferase subunit C (100 aa).

This sequence belongs to the GatC family. In terms of assembly, heterotrimer of A, B and C subunits.

The enzyme catalyses L-glutamyl-tRNA(Gln) + L-glutamine + ATP + H2O = L-glutaminyl-tRNA(Gln) + L-glutamate + ADP + phosphate + H(+). The catalysed reaction is L-aspartyl-tRNA(Asn) + L-glutamine + ATP + H2O = L-asparaginyl-tRNA(Asn) + L-glutamate + ADP + phosphate + 2 H(+). Its function is as follows. Allows the formation of correctly charged Asn-tRNA(Asn) or Gln-tRNA(Gln) through the transamidation of misacylated Asp-tRNA(Asn) or Glu-tRNA(Gln) in organisms which lack either or both of asparaginyl-tRNA or glutaminyl-tRNA synthetases. The reaction takes place in the presence of glutamine and ATP through an activated phospho-Asp-tRNA(Asn) or phospho-Glu-tRNA(Gln). The sequence is that of Aspartyl/glutamyl-tRNA(Asn/Gln) amidotransferase subunit C from Rickettsia peacockii (strain Rustic).